The chain runs to 283 residues: Pantothenate synthetase (283 aa).

34-41 (MGALHDGH) is a binding site for ATP. Residue H41 is the Proton donor of the active site. Q65 contributes to the (R)-pantoate binding site. Beta-alanine is bound at residue Q65. Residue 152 to 155 (GEKD) participates in ATP binding. Q158 serves as a coordination point for (R)-pantoate. ATP contacts are provided by residues V181 and 189 to 192 (MSSR).

Belongs to the pantothenate synthetase family. Homodimer.

The protein resides in the cytoplasm. The catalysed reaction is (R)-pantoate + beta-alanine + ATP = (R)-pantothenate + AMP + diphosphate + H(+). It participates in cofactor biosynthesis; (R)-pantothenate biosynthesis; (R)-pantothenate from (R)-pantoate and beta-alanine: step 1/1. Catalyzes the condensation of pantoate with beta-alanine in an ATP-dependent reaction via a pantoyl-adenylate intermediate. In Bradyrhizobium sp. (strain BTAi1 / ATCC BAA-1182), this protein is Pantothenate synthetase.